Here is a 268-residue protein sequence, read N- to C-terminus: 3-deoxy-manno-octulosonate cytidylyltransferase (268 aa).

It belongs to the KdsB family.

Its subcellular location is the cytoplasm. The catalysed reaction is 3-deoxy-alpha-D-manno-oct-2-ulosonate + CTP = CMP-3-deoxy-beta-D-manno-octulosonate + diphosphate. The protein operates within nucleotide-sugar biosynthesis; CMP-3-deoxy-D-manno-octulosonate biosynthesis; CMP-3-deoxy-D-manno-octulosonate from 3-deoxy-D-manno-octulosonate and CTP: step 1/1. It participates in bacterial outer membrane biogenesis; lipopolysaccharide biosynthesis. In terms of biological role, activates KDO (a required 8-carbon sugar) for incorporation into bacterial lipopolysaccharide in Gram-negative bacteria. The sequence is that of 3-deoxy-manno-octulosonate cytidylyltransferase from Psychrobacter cryohalolentis (strain ATCC BAA-1226 / DSM 17306 / VKM B-2378 / K5).